Here is a 328-residue protein sequence, read N- to C-terminus: tRNA uridine(34) hydroxylase (328 aa).

In terms of domain architecture, Rhodanese spans 130–224; sequence LDEDTVVLDT…YGKDPEVQGE (95 aa). Residue cysteine 184 is the Cysteine persulfide intermediate of the active site.

This sequence belongs to the TrhO family.

The enzyme catalyses uridine(34) in tRNA + AH2 + O2 = 5-hydroxyuridine(34) in tRNA + A + H2O. In terms of biological role, catalyzes oxygen-dependent 5-hydroxyuridine (ho5U) modification at position 34 in tRNAs. This chain is tRNA uridine(34) hydroxylase, found in Streptococcus pyogenes serotype M12 (strain MGAS2096).